A 391-amino-acid chain; its full sequence is Probable sugar efflux transporter (391 aa).

12 consecutive transmembrane segments (helical) span residues 16-36 (VFVF…PVAL), 51-71 (VGLM…PLML), 82-102 (LLFL…AWNF), 110-130 (MGIA…VIRV), 138-158 (QALG…LPLG), 170-190 (TFGV…KLLP), 210-230 (PLLM…FTTY), 247-267 (ITTL…FLFS), 277-297 (FIAF…VFKN), 300-320 (WVIF…TIAL), 338-358 (IFSG…SIVI), and 361-381 (LGLE…LFWL).

Belongs to the major facilitator superfamily. SotB (TC 2.A.1.2) family.

It is found in the cell inner membrane. Functionally, involved in the efflux of sugars. The physiological role may be the reduction of the intracellular concentration of toxic sugars or sugar metabolites. This chain is Probable sugar efflux transporter, found in Helicobacter pylori (strain HPAG1).